Consider the following 270-residue polypeptide: Formamidopyrimidine-DNA glycosylase (270 aa).

The Schiff-base intermediate with DNA role is filled by proline 2. The active-site Proton donor is the glutamate 3. The Proton donor; for beta-elimination activity role is filled by lysine 58. DNA is bound by residues histidine 92, arginine 111, and arginine 153. The FPG-type zinc finger occupies 238–270 (SVYGASVCPVCGGALRQIRLAQRGTWFCPRCQR). The Proton donor; for delta-elimination activity role is filled by arginine 260.

The protein belongs to the FPG family. As to quaternary structure, monomer. Zn(2+) serves as cofactor.

It catalyses the reaction Hydrolysis of DNA containing ring-opened 7-methylguanine residues, releasing 2,6-diamino-4-hydroxy-5-(N-methyl)formamidopyrimidine.. The enzyme catalyses 2'-deoxyribonucleotide-(2'-deoxyribose 5'-phosphate)-2'-deoxyribonucleotide-DNA = a 3'-end 2'-deoxyribonucleotide-(2,3-dehydro-2,3-deoxyribose 5'-phosphate)-DNA + a 5'-end 5'-phospho-2'-deoxyribonucleoside-DNA + H(+). Involved in base excision repair of DNA damaged by oxidation or by mutagenic agents. Acts as a DNA glycosylase that recognizes and removes damaged bases. Has a preference for oxidized purines, such as 7,8-dihydro-8-oxoguanine (8-oxoG). Has AP (apurinic/apyrimidinic) lyase activity and introduces nicks in the DNA strand. Cleaves the DNA backbone by beta-delta elimination to generate a single-strand break at the site of the removed base with both 3'- and 5'-phosphates. This Halorhodospira halophila (strain DSM 244 / SL1) (Ectothiorhodospira halophila (strain DSM 244 / SL1)) protein is Formamidopyrimidine-DNA glycosylase.